The following is a 102-amino-acid chain: Small ribosomal subunit protein uS14 (102 aa).

It belongs to the universal ribosomal protein uS14 family. As to quaternary structure, part of the 30S ribosomal subunit. Contacts proteins S3 and S10.

Binds 16S rRNA, required for the assembly of 30S particles and may also be responsible for determining the conformation of the 16S rRNA at the A site. The polypeptide is Small ribosomal subunit protein uS14 (Wolbachia pipientis wMel).